The following is a 126-amino-acid chain: Holo-[acyl-carrier-protein] synthase (126 aa).

Residues D9 and E58 each coordinate Mg(2+).

It belongs to the P-Pant transferase superfamily. AcpS family. Requires Mg(2+) as cofactor.

Its subcellular location is the cytoplasm. It catalyses the reaction apo-[ACP] + CoA = holo-[ACP] + adenosine 3',5'-bisphosphate + H(+). Its function is as follows. Transfers the 4'-phosphopantetheine moiety from coenzyme A to a Ser of acyl-carrier-protein. This Citrobacter koseri (strain ATCC BAA-895 / CDC 4225-83 / SGSC4696) protein is Holo-[acyl-carrier-protein] synthase.